A 700-amino-acid chain; its full sequence is Elongation factor G (700 aa).

The tr-type G domain occupies 8–290; the sequence is ERYRNIGISA…AVVEYLPAPT (283 aa). Residues 17–24, 88–92, and 142–145 each bind GTP; these read AHIDAGKT, DTPGH, and NKMD.

The protein belongs to the TRAFAC class translation factor GTPase superfamily. Classic translation factor GTPase family. EF-G/EF-2 subfamily.

It is found in the cytoplasm. Functionally, catalyzes the GTP-dependent ribosomal translocation step during translation elongation. During this step, the ribosome changes from the pre-translocational (PRE) to the post-translocational (POST) state as the newly formed A-site-bound peptidyl-tRNA and P-site-bound deacylated tRNA move to the P and E sites, respectively. Catalyzes the coordinated movement of the two tRNA molecules, the mRNA and conformational changes in the ribosome. The protein is Elongation factor G of Haemophilus influenzae (strain PittEE).